Here is a 464-residue protein sequence, read N- to C-terminus: Isthmin-1 (464 aa).

The signal sequence occupies residues 1–29; the sequence is MVRLAAELLLLLGLLLLTLHITVLRGSGA. Asn-39 is a glycosylation site (N-linked (GlcNAc...) asparagine). Disordered regions lie at residues 50-98, 135-155, and 173-219; these read NVGS…LQRD, PDSE…SVPS, and SGDQ…STDG. Residues 51–63 are compositionally biased toward polar residues; that stretch reads VGSDTTSETSFSL. 2 stretches are compositionally biased toward basic and acidic residues: residues 66-76 and 138-147; these read EAPREHLDHQA and EADKDQHPEN. Residues 218-262 enclose the TSP type-1 domain; sequence DGEGDWSLWSVCSVTCGNGNQKRTRSCGYACTATESRTCDRPNCP. 3 disulfides stabilise this stretch: Cys-229–Cys-256, Cys-233–Cys-261, and Cys-244–Cys-248. The AMOP domain occupies 289–452; that stretch reads LFEVDTDSCE…QKCTESPSDE (164 aa).

The protein belongs to the isthmin family. In terms of assembly, interacts with integrin ITGAV/ITGB5.

The protein localises to the secreted. Its function is as follows. Acts as an angiogenesis inhibitor. In Homo sapiens (Human), this protein is Isthmin-1 (ISM1).